The primary structure comprises 669 residues: Dymeclin (669 aa).

Gly2 carries N-myristoyl glycine lipidation.

The protein belongs to the dymeclin family. As to quaternary structure, interacts with GOLM1 and PPIB. Myristoylated in vitro; myristoylation is not essential for protein targeting to Golgi compartment. Expressed in most embryo-fetal and adult tissues. Abundant in primary chondrocytes, osteoblasts, cerebellum, kidney, lung, stomach, heart, pancreas and fetal brain. Very low or no expression in the spleen, thymus, esophagus, bladder and thyroid gland.

Its subcellular location is the cytoplasm. The protein resides in the golgi apparatus. It localises to the membrane. Its function is as follows. Necessary for correct organization of Golgi apparatus. Involved in bone development. The polypeptide is Dymeclin (DYM) (Homo sapiens (Human)).